A 134-amino-acid polypeptide reads, in one-letter code: Rhoptry antigen protein (134 aa).

2 disordered regions span residues 21–82 and 96–134; these read MGPL…SNLK and QLDKEKPKKKKSKRKKKRDSSSDRILLEESKTFTSENEL. The segment covering 29–38 has biased composition (polar residues); it reads KSTSAASTSD. Low complexity predominate over residues 39–54; the sequence is ELSGSEGPSTESTSTG. The span at 57-69 shows a compositional bias: basic and acidic residues; that stretch reads GEDKTTDNTYKEM. Positions 102-113 are enriched in basic residues; sequence PKKKKSKRKKKR. Residues 114 to 126 are compositionally biased toward basic and acidic residues; the sequence is DSSSDRILLEESK.

This chain is Rhoptry antigen protein, found in Plasmodium falciparum.